Consider the following 664-residue polypeptide: Alkaline/neutral invertase C, mitochondrial (664 aa).

Residues Ser41, Ser125, and Ser657 each carry the phosphoserine modification.

It belongs to the glycosyl hydrolase 100 family. In terms of tissue distribution, expressed in seedlings, roots and flowers.

It is found in the mitochondrion. It carries out the reaction Hydrolysis of terminal non-reducing beta-D-fructofuranoside residues in beta-D-fructofuranosides.. In terms of biological role, mitochondrial invertase that cleaves sucrose into glucose and fructose and is involved in the regulation of aerial tissue development and floral transition. May be modulating hormone balance in relation to the radicle emergence. The polypeptide is Alkaline/neutral invertase C, mitochondrial (Arabidopsis thaliana (Mouse-ear cress)).